We begin with the raw amino-acid sequence, 862 residues long: Aldehyde-alcohol dehydrogenase (862 aa).

C244 is an active-site residue. Residue 420 to 425 participates in NAD(+) binding; it reads GFWGGN.

It in the N-terminal section; belongs to the aldehyde dehydrogenase family. The protein in the C-terminal section; belongs to the iron-containing alcohol dehydrogenase family.

The catalysed reaction is a primary alcohol + NAD(+) = an aldehyde + NADH + H(+). It catalyses the reaction a secondary alcohol + NAD(+) = a ketone + NADH + H(+). The enzyme catalyses an aldehyde + NAD(+) + H2O = a carboxylate + NADH + 2 H(+). Functionally, has both aldehyde and alcohol dehydrogenase activities. Can use acetaldehyde, butyraldehyde, butanol and ethanol. The chain is Aldehyde-alcohol dehydrogenase from Clostridium acetobutylicum (strain ATCC 824 / DSM 792 / JCM 1419 / IAM 19013 / LMG 5710 / NBRC 13948 / NRRL B-527 / VKM B-1787 / 2291 / W).